The primary structure comprises 446 residues: Calcium-binding and coiled-coil domain-containing protein 2 (446 aa).

The short motif at 133–136 (ILVV) is the CLIR element. Residues 137-349 (TTQGEVEEIE…RENSRLLSYM (213 aa)) adopt a coiled-coil conformation. The short motif at 203 to 206 (DYWE) is the LIR-like element. The segment at 371–381 (NPGLVYGNPYS) is interaction with LGALS8. Positions 395-446 (KKCPICKADDICDHILEQQQMQPLCLNCPICDKIFPATEKQIFEDHVFCHSL) are interaction with MYO6. The UBZ1-type zinc-finger motif lies at 419–444 (CLNCPICDKIFPATEKQIFEDHVFCH). Zn(2+) is bound by residues Cys422, Cys425, His440, and His444. Ser445 bears the Phosphoserine mark.

This sequence belongs to the CALCOCO family. As to quaternary structure, dimer. Part of a complex consisting of CALCOCO2, TAX1BP1 and MYO6. Interacts with MYO6. Interacts with GEMIN4. Interacts with ATG8 family members MAP1LC3A, MAP1LC3B, GABARAP, GABARAPL1 and GABARAPL2. Interacts with ATG8 family member MAP1LC3C. Interacts with LGALS8. Interacts with TOM1; the interaction is indirect and is mediated by MYO6, which acts as a bridge between TOM1 and CALCOCO2. Interacts with AZI2.

The protein localises to the cytoplasm. It is found in the perinuclear region. It localises to the cytoskeleton. The protein resides in the cytoplasmic vesicle. Its subcellular location is the autophagosome membrane. Its function is as follows. Xenophagy-specific receptor required for autophagy-mediated intracellular bacteria degradation. Acts as an effector protein of galectin-sensed membrane damage that restricts the proliferation of infecting pathogens upon entry into the cytosol by targeting LGALS8-associated bacteria for autophagy. Initially orchestrates bacteria targeting to autophagosomes and subsequently ensures pathogen degradation by regulating pathogen-containing autophagosome maturation. Bacteria targeting to autophagosomes relies on its interaction with MAP1LC3A, MAP1LC3B and/or GABARAPL2, whereas regulation of pathogen-containing autophagosome maturation requires the interaction with MAP3LC3C. May play a role in ruffle formation and actin cytoskeleton organization and seems to negatively regulate constitutive secretion. In Pongo abelii (Sumatran orangutan), this protein is Calcium-binding and coiled-coil domain-containing protein 2.